A 798-amino-acid chain; its full sequence is Probable G-protein coupled receptor 156 (798 aa).

The Extracellular portion of the chain corresponds to 1–49 (MEPEINCSEFCDSFPGQELDRRPLHDLCKTTITESQHSSTAASPLSPAL). Asparagine 6 carries an N-linked (GlcNAc...) asparagine glycan. A helical membrane pass occupies residues 50–70 (LGIMWTFLSCGLLLVLFFLAF). At 71-86 (TIRCRKNRIVKMSSPN) the chain is on the cytoplasmic side. A helical transmembrane segment spans residues 87-107 (LNVVTLLGSCLTYISAYLFGI). Residues 108–118 (QDALEGSSVEA) are Extracellular-facing. Residues 119 to 139 (LIQTRLSLLCIGTSLVFGPIL) traverse the membrane as a helical segment. Over 140 to 164 (GKSWRLYKVFTQRVPDKRVIIKDLQ) the chain is Cytoplasmic. The helical transmembrane segment at 165–185 (LLGLVAALVVADVILLVTWVL) threads the bilayer. Residues 186–222 (TDPIQCLQMLGVSMKVTGRDVSCSLTNTHFCASRYSD) lie on the Extracellular side of the membrane. A helical membrane pass occupies residues 223–243 (VWIALVLGCKGLLLLYGAYLA). Topologically, residues 244-257 (GLTNHVSSPPVNQS) are cytoplasmic. Residues 258 to 278 (LTIMVGVNLLLLTAGLLFVVT) form a helical membrane-spanning segment. Over 279-288 (RYLHSWPNLV) the chain is Extracellular. The helical transmembrane segment at 289–309 (FGLTSGGIFVCTTTVNCCVFI) threads the bilayer. Topologically, residues 310–798 (PQLKQWKAFE…FKDDLKPTLV (489 aa)) are cytoplasmic. Residues 353–390 (DEKSCMERLLTEKNAVIESLQEQVSNAKEKLVKLMSAE) adopt a coiled-coil conformation. Disordered regions lie at residues 441–497 (HVQG…PMAP), 546–666 (SEAP…KQCE), and 693–715 (PAAPCLPSSPALPRQRQPRPRLS). Over residues 479–492 (PKAEQSEGPERGDQ) the composition is skewed to basic and acidic residues. The segment covering 559 to 572 (LWKSTTSRSPQKLS) has biased composition (polar residues). Residues 583–594 (VRRRRAAQRARS) show a composition bias toward basic residues. Residues 606–624 (HQANSTVSSSQSGLIVQNR) are compositionally biased toward polar residues. Residues 639-648 (PRSSSVKPSP) are compositionally biased toward low complexity.

It belongs to the G-protein coupled receptor 3 family. GABA-B receptor subfamily. Expressed in the outer and inner hair cells of the organ of Corti (at protein level). Expressed in the utricle and saccule within the vestibule (at protein level).

It is found in the cell membrane. The protein localises to the postsynaptic cell membrane. Functionally, orphan G-protein coupled receptor involved in the regulation of hair cell orientation in mechanosensory organs of the inner ear. It is required to trigger a 180 degree reversal in hair cell orientation, creating a virtual line of polarity reversal (LPR) across which stereociliary bundles are arranged in opposite orientations. The chain is Probable G-protein coupled receptor 156 (Gpr156) from Mus musculus (Mouse).